The following is a 95-amino-acid chain: Aspartyl/glutamyl-tRNA(Asn/Gln) amidotransferase subunit C (95 aa).

Belongs to the GatC family. In terms of assembly, heterotrimer of A, B and C subunits.

It catalyses the reaction L-glutamyl-tRNA(Gln) + L-glutamine + ATP + H2O = L-glutaminyl-tRNA(Gln) + L-glutamate + ADP + phosphate + H(+). The catalysed reaction is L-aspartyl-tRNA(Asn) + L-glutamine + ATP + H2O = L-asparaginyl-tRNA(Asn) + L-glutamate + ADP + phosphate + 2 H(+). Allows the formation of correctly charged Asn-tRNA(Asn) or Gln-tRNA(Gln) through the transamidation of misacylated Asp-tRNA(Asn) or Glu-tRNA(Gln) in organisms which lack either or both of asparaginyl-tRNA or glutaminyl-tRNA synthetases. The reaction takes place in the presence of glutamine and ATP through an activated phospho-Asp-tRNA(Asn) or phospho-Glu-tRNA(Gln). The chain is Aspartyl/glutamyl-tRNA(Asn/Gln) amidotransferase subunit C from Desulforapulum autotrophicum (strain ATCC 43914 / DSM 3382 / VKM B-1955 / HRM2) (Desulfobacterium autotrophicum).